We begin with the raw amino-acid sequence, 418 residues long: D-amino acid dehydrogenase (418 aa).

3–17 (VLVLGAGVVGTTSAW) contributes to the FAD binding site.

Belongs to the DadA oxidoreductase family. It depends on FAD as a cofactor.

The catalysed reaction is a D-alpha-amino acid + A + H2O = a 2-oxocarboxylate + AH2 + NH4(+). The protein operates within amino-acid degradation; D-alanine degradation; NH(3) and pyruvate from D-alanine: step 1/1. Oxidative deamination of D-amino acids. This chain is D-amino acid dehydrogenase, found in Dechloromonas aromatica (strain RCB).